The chain runs to 184 residues: Ribosome-recycling factor (184 aa).

This sequence belongs to the RRF family.

Its subcellular location is the cytoplasm. In terms of biological role, responsible for the release of ribosomes from messenger RNA at the termination of protein biosynthesis. May increase the efficiency of translation by recycling ribosomes from one round of translation to another. This is Ribosome-recycling factor from Agathobacter rectalis (strain ATCC 33656 / DSM 3377 / JCM 17463 / KCTC 5835 / VPI 0990) (Eubacterium rectale).